We begin with the raw amino-acid sequence, 214 residues long: External core antigen (214 aa).

The signal sequence occupies residues 1–19 (MQLFHLCLIISCTCPTVQA). The tract at residues 25 to 27 (GWL) is HBEAG. The disordered stretch occupies residues 165 to 214 (NAPILSTLPETTVVRRRDRGRSPRRRTPSPRRRRSPSPRRRRSQSRESQC). Residues 178–207 (VRRRDRGRSPRRRTPSPRRRRSPSPRRRRS) are compositionally biased toward basic residues. Residues 186–192 (SPRRRTP) form a 1; half-length repeat. The interval 186-208 (SPRRRTPSPRRRRSPSPRRRRSQ) is 3 X 8 AA repeats of S-P-R-R-R-R-S-[PQ]. A propeptide spanning residues 186 to 214 (SPRRRTPSPRRRRSPSPRRRRSQSRESQC) is cleaved from the precursor. A run of 2 repeats spans residues 193–200 (SPRRRRSP) and 201–208 (SPRRRRSQ).

The protein belongs to the orthohepadnavirus precore antigen family. In terms of assembly, homodimerizes. Post-translationally, phosphorylated. Cleaved by host furin.

It is found in the secreted. The protein localises to the host nucleus. In terms of biological role, may regulate immune response to the intracellular capsid in acting as a T-cell tolerogen, by having an immunoregulatory effect which prevents destruction of infected cells by cytotoxic T-cells. This immune regulation may predispose to chronicity during perinatal infections and prevent severe liver injury during adult infections. The sequence is that of External core antigen from Hepatitis B virus genotype A2 subtype adw2 (strain Rutter 1979) (HBV-A).